The sequence spans 214 residues: Ribosomal protein uL16-like (214 aa).

It belongs to the universal ribosomal protein uL16 family. As to quaternary structure, component of a male germ cell-specific 60S large ribosomal subunit (LSU), which contains RPL10L and RPL39L, instead of RPL10 and RPL39 paralogs. The composition of the rest of the complex is similar to classical ribosomes. In terms of tissue distribution, almost testis-specific. Also expressed in pre- and postmenopausal ovary.

The protein localises to the cytoplasm. In terms of biological role, testis-specific component of the ribosome, which is required for the transition from prophase to metaphase in male meiosis I. Compensates for the inactivated X-linked RPL10 paralog during spermatogenesis. The ribosome is a large ribonucleoprotein complex responsible for the synthesis of proteins in the cell. The male germ cell-specific ribosome displays a ribosomal polypeptide exit tunnel of distinct size and charge states compared with the classical ribosome. It is responsible for regulating the biosynthesis and folding of a subset of male germ-cell-specific proteins that are essential for the formation of sperm. This is Ribosomal protein uL16-like from Homo sapiens (Human).